We begin with the raw amino-acid sequence, 237 residues long: Sugar fermentation stimulation protein homolog (237 aa).

It belongs to the SfsA family.

The sequence is that of Sugar fermentation stimulation protein homolog from Actinobacillus pleuropneumoniae serotype 5b (strain L20).